A 274-amino-acid polypeptide reads, in one-letter code: Glutamate racemase (274 aa).

Substrate is bound by residues 9-10 (DS) and 41-42 (YG). Cys72 acts as the Proton donor/acceptor in catalysis. Position 73–74 (73–74 (NT)) interacts with substrate. The Proton donor/acceptor role is filled by Cys184. A substrate-binding site is contributed by 185-186 (TH).

Belongs to the aspartate/glutamate racemases family.

The enzyme catalyses L-glutamate = D-glutamate. It functions in the pathway cell wall biogenesis; peptidoglycan biosynthesis. In terms of biological role, provides the (R)-glutamate required for cell wall biosynthesis. The polypeptide is Glutamate racemase (Oceanobacillus iheyensis (strain DSM 14371 / CIP 107618 / JCM 11309 / KCTC 3954 / HTE831)).